Consider the following 206-residue polypeptide: MEYRLKAYYREGEKPSALRRAGKLPGVMYNRHLNRKVYVDLVEFDKVFRQASIHHVIVLELPDGQSLPTLVRQVNLDKRRRRPEHVDFFVLSDEPVEMYVPLRFVGTPAGVRAGGVLQEIHRDILVKVSPRNIPEFIEVDVSGLEIGDSLHASDLKLPPGVELAVSPEETIAAVVPPEDVEKLAEEAAAEVAEPEVIKKGKEEEEE.

The disordered stretch occupies residues 184-206 (AEEAAAEVAEPEVIKKGKEEEEE). The segment covering 195 to 206 (EVIKKGKEEEEE) has biased composition (basic and acidic residues).

It belongs to the bacterial ribosomal protein bL25 family. CTC subfamily. Part of the 50S ribosomal subunit; part of the 5S rRNA/L5/L18/L25 subcomplex. Contacts the 5S rRNA. Binds to the 5S rRNA independently of L5 and L18.

Functionally, this is one of the proteins that binds to the 5S RNA in the ribosome where it forms part of the central protuberance. In Thermus thermophilus (strain ATCC BAA-163 / DSM 7039 / HB27), this protein is Large ribosomal subunit protein bL25.